Here is a 204-residue protein sequence, read N- to C-terminus: Large ribosomal subunit protein uL4 (204 aa).

Residues 48–75 form a disordered region; the sequence is HTKGRSDVSGGGKKPWRQKGRGGARAGS.

This sequence belongs to the universal ribosomal protein uL4 family. In terms of assembly, part of the 50S ribosomal subunit.

In terms of biological role, one of the primary rRNA binding proteins, this protein initially binds near the 5'-end of the 23S rRNA. It is important during the early stages of 50S assembly. It makes multiple contacts with different domains of the 23S rRNA in the assembled 50S subunit and ribosome. Functionally, forms part of the polypeptide exit tunnel. The polypeptide is Large ribosomal subunit protein uL4 (Campylobacter fetus subsp. fetus (strain 82-40)).